A 498-amino-acid chain; its full sequence is ATP synthase subunit beta, chloroplastic (498 aa).

Glycine 172–threonine 179 contributes to the ATP binding site.

This sequence belongs to the ATPase alpha/beta chains family. F-type ATPases have 2 components, CF(1) - the catalytic core - and CF(0) - the membrane proton channel. CF(1) has five subunits: alpha(3), beta(3), gamma(1), delta(1), epsilon(1). CF(0) has four main subunits: a(1), b(1), b'(1) and c(9-12).

It localises to the plastid. The protein resides in the chloroplast thylakoid membrane. It catalyses the reaction ATP + H2O + 4 H(+)(in) = ADP + phosphate + 5 H(+)(out). In terms of biological role, produces ATP from ADP in the presence of a proton gradient across the membrane. The catalytic sites are hosted primarily by the beta subunits. This chain is ATP synthase subunit beta, chloroplastic, found in Nicotiana bigelovii (Bigelov's tobacco).